Reading from the N-terminus, the 1034-residue chain is Presequence protease, mitochondrial (1034 aa).

A mitochondrion-targeting transit peptide spans 1-26 (MLKTRLKQSRAISRVVRRYACSHPIS). Residue H97 coordinates Zn(2+). Residue E100 is the Proton acceptor of the active site. H101 provides a ligand contact to Zn(2+). The active site involves E173. Zn(2+) is bound at residue E198.

This sequence belongs to the peptidase M16 family. PreP subfamily. As to quaternary structure, monomer and homodimer; homodimerization is induced by binding of the substrate. Zn(2+) is required as a cofactor.

It is found in the mitochondrion intermembrane space. It localises to the mitochondrion matrix. In terms of biological role, degrades mitochondrial transit peptides after their cleavage in the intermembrane space or in the matrix, and presequence peptides; clearance of these peptides is required to keep the presequence processing machinery running. Preferentially cleaves the N-terminal side of paired basic amino acid residues. Also degrades other unstructured peptides. May function as an ATP-dependent peptidase as opposed to a metalloendopeptidase. This Candida albicans (strain SC5314 / ATCC MYA-2876) (Yeast) protein is Presequence protease, mitochondrial (CYM1).